A 142-amino-acid polypeptide reads, in one-letter code: MIGHSTQEKIEKLVQSCGCNLYDLLLLKENERSILRLYITKEVGVSLDDCAMVSDLISPLLDVEDPLAGEYFLEVSSPGIERPLKRPAHYQHALGELARIKFADKNEIEGEIEAADETSVKLKGEEPIPYSLIKKAQTFYRW.

Belongs to the RimP family.

It localises to the cytoplasm. Its function is as follows. Required for maturation of 30S ribosomal subunits. The sequence is that of Ribosome maturation factor RimP from Wolinella succinogenes (strain ATCC 29543 / DSM 1740 / CCUG 13145 / JCM 31913 / LMG 7466 / NCTC 11488 / FDC 602W) (Vibrio succinogenes).